We begin with the raw amino-acid sequence, 363 residues long: Fructose-bisphosphate aldolase C (363 aa).

Tyrosine 5 is modified (phosphotyrosine). A phosphoserine mark is found at serine 36, serine 39, and serine 45. Arginine 56 is a binding site for substrate. Lysine 111 bears the N6-acetyllysine mark. Lysine 147 provides a ligand contact to substrate. Glutamate 188 serves as the catalytic Proton acceptor. Lysine 230 functions as the Schiff-base intermediate with dihydroxyacetone-P in the catalytic mechanism.

The protein belongs to the class I fructose-bisphosphate aldolase family. In terms of assembly, homotetramer. Interacts with ATP6V1E1. Expressed exclusively in Purkinje cells in bands running from anterior to posterior across most of the cerebellum. Expressed at higher levels in the brains of BSE-infected animals.

It carries out the reaction beta-D-fructose 1,6-bisphosphate = D-glyceraldehyde 3-phosphate + dihydroxyacetone phosphate. Its pathway is carbohydrate degradation; glycolysis; D-glyceraldehyde 3-phosphate and glycerone phosphate from D-glucose: step 4/4. The sequence is that of Fructose-bisphosphate aldolase C (Aldoc) from Mus musculus (Mouse).